A 256-amino-acid chain; its full sequence is Type III pantothenate kinase (256 aa).

6–13 (DIGNTHIV) is a binding site for ATP. 109 to 112 (GADR) serves as a coordination point for substrate. Residue D111 is the Proton acceptor of the active site. D132 lines the K(+) pocket. Residue T135 participates in ATP binding. Position 186 (T186) interacts with substrate.

It belongs to the type III pantothenate kinase family. As to quaternary structure, homodimer. NH4(+) is required as a cofactor. K(+) serves as cofactor.

The protein localises to the cytoplasm. The enzyme catalyses (R)-pantothenate + ATP = (R)-4'-phosphopantothenate + ADP + H(+). The protein operates within cofactor biosynthesis; coenzyme A biosynthesis; CoA from (R)-pantothenate: step 1/5. In terms of biological role, catalyzes the phosphorylation of pantothenate (Pan), the first step in CoA biosynthesis. In Fusobacterium nucleatum subsp. nucleatum (strain ATCC 25586 / DSM 15643 / BCRC 10681 / CIP 101130 / JCM 8532 / KCTC 2640 / LMG 13131 / VPI 4355), this protein is Type III pantothenate kinase.